Consider the following 327-residue polypeptide: Mycothiol acetyltransferase (327 aa).

N-acetyltransferase domains follow at residues 11–159 (EPHG…VTLP) and 162–327 (VQIR…EGTS). Position 42 (E42) interacts with 1D-myo-inositol 2-(L-cysteinylamino)-2-deoxy-alpha-D-glucopyranoside. 89–91 (LVI) contacts acetyl-CoA. Residues E189, K228, and E251 each contribute to the 1D-myo-inositol 2-(L-cysteinylamino)-2-deoxy-alpha-D-glucopyranoside site. Acetyl-CoA contacts are provided by residues 255–257 (LGV) and 262–268 (QGLGLGR). Y289 contacts 1D-myo-inositol 2-(L-cysteinylamino)-2-deoxy-alpha-D-glucopyranoside. Acetyl-CoA is bound at residue 294 to 299 (NAPAIR).

This sequence belongs to the acetyltransferase family. MshD subfamily. In terms of assembly, monomer.

It catalyses the reaction 1D-myo-inositol 2-(L-cysteinylamino)-2-deoxy-alpha-D-glucopyranoside + acetyl-CoA = mycothiol + CoA + H(+). Catalyzes the transfer of acetyl from acetyl-CoA to desacetylmycothiol (Cys-GlcN-Ins) to form mycothiol. The sequence is that of Mycothiol acetyltransferase from Acidothermus cellulolyticus (strain ATCC 43068 / DSM 8971 / 11B).